A 51-amino-acid polypeptide reads, in one-letter code: Insulin (51 aa).

3 disulfide bridges follow: C7–C37, C19–C50, and C36–C41.

This sequence belongs to the insulin family. Heterodimer of a B chain and an A chain linked by two disulfide bonds.

It is found in the secreted. Functionally, insulin decreases blood glucose concentration. It increases cell permeability to monosaccharides, amino acids and fatty acids. It accelerates glycolysis, the pentose phosphate cycle, and glycogen synthesis in liver. This Elephas maximus (Indian elephant) protein is Insulin (INS).